Reading from the N-terminus, the 911-residue chain is Protein transport protein SEC24-1 (911 aa).

Residues 108–123 show a composition bias toward low complexity; the sequence is QPLPQQQQQQQQQQGP. The disordered stretch occupies residues 108–130; that stretch reads QPLPQQQQQQQQQQGPAKPPKPM. C226, C229, C248, and C251 together coordinate Zn(2+). A zinc finger-like region spans residues 226 to 251; it reads CRRCRSYMNPFVHFNQDGRRWKCNIC.

It belongs to the SEC23/SEC24 family. SEC24 subfamily. The COPII coat is composed of at least 5 proteins: the SEC23/24 complex, the SEC13/31 complex, and the protein SAR1. Golgi apparatus membrane; Peripheral membrane protein; Cytoplasmic side.

It is found in the cytoplasm. The protein localises to the cytoplasmic vesicle. The protein resides in the COPII-coated vesicle membrane. It localises to the endoplasmic reticulum membrane. Its subcellular location is the golgi apparatus membrane. In terms of biological role, component of the coat protein complex II (COPII) which promotes the formation of transport vesicles from the endoplasmic reticulum (ER). The coat has two main functions, the physical deformation of the endoplasmic reticulum membrane into vesicles and the selection of cargo molecules. This is Protein transport protein SEC24-1 (SEC241) from Naumovozyma castellii (Yeast).